Here is a 953-residue protein sequence, read N- to C-terminus: Translation initiation factor IF-2 (953 aa).

Residues 53–368 (AKKAVAGTSE…PVTERKFHEL (316 aa)) form a disordered region. Basic and acidic residues-rich tracts occupy residues 135-151 (FKAE…ERRK) and 162-190 (RNDR…RNRQ). Residues 191–214 (EQGNQHRNQGQSQYNQQRQSFNQG) are compositionally biased toward low complexity. Over residues 236–266 (RSSEERFKQAKANKEALREQNKRKEQAKLED) the composition is skewed to basic and acidic residues. Positions 274 to 288 (PKPTAKAPATPAPTA) are enriched in low complexity. The span at 301–318 (ARPDKERDNFDHEEDGPR) shows a compositional bias: basic and acidic residues. Low complexity predominate over residues 332–341 (NQKNSNWNNN). One can recognise a tr-type G domain in the interval 455 to 622 (ERPPVVTIMG…TVLLVAEIQE (168 aa)). The interval 464–471 (GHVDHGKT) is G1. 464–471 (GHVDHGKT) lines the GTP pocket. A G2 region spans residues 489–493 (GITQH). A G3 region spans residues 510–513 (DTPG). GTP contacts are provided by residues 510 to 514 (DTPGH) and 564 to 567 (NKID). Residues 564–567 (NKID) form a G4 region. Residues 600-602 (SAK) are G5.

The protein belongs to the TRAFAC class translation factor GTPase superfamily. Classic translation factor GTPase family. IF-2 subfamily.

The protein localises to the cytoplasm. In terms of biological role, one of the essential components for the initiation of protein synthesis. Protects formylmethionyl-tRNA from spontaneous hydrolysis and promotes its binding to the 30S ribosomal subunits. Also involved in the hydrolysis of GTP during the formation of the 70S ribosomal complex. The chain is Translation initiation factor IF-2 from Streptococcus gordonii (strain Challis / ATCC 35105 / BCRC 15272 / CH1 / DL1 / V288).